A 499-amino-acid polypeptide reads, in one-letter code: Thioredoxin reductase 1, cytoplasmic (499 aa).

Residues 18 to 23 (IGGGSG), 42 to 43 (DF), 58 to 59 (TC), and 63 to 67 (GCIPK) contribute to the FAD site. A disulfide bond links Cys-59 and Cys-64. Lys-68 is modified (N6-succinyllysine). Position 131 is a phosphotyrosine (Tyr-131). FAD is bound by residues 131–132 (YG) and Thr-161. NADP(+) contacts are provided by residues Arg-166, 198 to 204 (ASYVALE), 221 to 222 (RS), Arg-226, 226 to 228 (RGF), 291 to 293 (VGR), and Lys-315. Residue Tyr-200 participates in FAD binding. Residues Asp-334, 341 to 343 (ELT), and His-472 each bind FAD. Glu-341 lines the NADP(+) pocket. The Proton acceptor role is filled by His-472. A cross-link (cysteinyl-selenocysteine (Cys-Sec)) is located at residues 497-498 (CU). Sec-498 is a non-standard amino acid (selenocysteine).

The protein belongs to the class-I pyridine nucleotide-disulfide oxidoreductase family. As to quaternary structure, homodimer. Requires FAD as cofactor. In terms of processing, ISGylated.

The protein localises to the cytoplasm. The enzyme catalyses [thioredoxin]-dithiol + NADP(+) = [thioredoxin]-disulfide + NADPH + H(+). The catalysed reaction is H2O2 + NADPH + H(+) = NADP(+) + 2 H2O. Functionally, reduces disulfideprotein thioredoxin (Trx) to its dithiol-containing form. Homodimeric flavoprotein involved in the regulation of cellular redox reactions, growth and differentiation. Contains a selenocysteine residue at the C-terminal active site that is essential for catalysis. Also has reductase activity on hydrogen peroxide (H2O2). The protein is Thioredoxin reductase 1, cytoplasmic of Rattus norvegicus (Rat).